A 199-amino-acid chain; its full sequence is Holliday junction resolvase RecU (199 aa).

Positions 82, 84, 97, and 116 each coordinate Mg(2+).

Belongs to the RecU family. Mg(2+) is required as a cofactor.

It localises to the cytoplasm. The enzyme catalyses Endonucleolytic cleavage at a junction such as a reciprocal single-stranded crossover between two homologous DNA duplexes (Holliday junction).. Endonuclease that resolves Holliday junction intermediates in genetic recombination. Cleaves mobile four-strand junctions by introducing symmetrical nicks in paired strands. Promotes annealing of linear ssDNA with homologous dsDNA. Required for DNA repair, homologous recombination and chromosome segregation. In Streptococcus agalactiae serotype Ia (strain ATCC 27591 / A909 / CDC SS700), this protein is Holliday junction resolvase RecU.